A 363-amino-acid polypeptide reads, in one-letter code: 3-methyl-D-ornithine--L-lysine ligase (363 aa).

K10 contacts ATP. 11–12 (LQ) is an L-lysine binding site. Residues D31, 49 to 50 (DV), and 72 to 73 (EN) contribute to the ATP site. E72 lines the L-lysine pocket. The region spanning 85-269 (EEFSCPVLFD…LIELLFRAFG (185 aa)) is the ATP-grasp domain. ADP contacts are provided by residues K104, K131, S138, and 160-163 (EEYV). D-ornithine contacts are provided by residues 169-171 (SLE) and D225. Mg(2+) contacts are provided by E227, E239, and D241. E239 provides a ligand contact to ADP. D-ornithine contacts are provided by residues 243–248 (RFPSQT) and E302. 2 residues coordinate L-lysine: S246 and E302.

It belongs to the PylC family. Requires Mg(2+) as cofactor.

It carries out the reaction (3R)-3-methyl-D-ornithine + L-lysine + ATP = (3R)-3-methyl-D-ornithyl-N(6)-L-lysine + ADP + phosphate + H(+). The protein operates within amino-acid biosynthesis; L-pyrrolysine biosynthesis. Its function is as follows. Is required for the biosynthesis of pyrrolysine. Catalyzes the ATP-dependent ligation between (3R)-3-methyl-D-ornithine and L-lysine, leading to (3R)-3-methyl-D-ornithyl-N6-L-lysine. The protein is 3-methyl-D-ornithine--L-lysine ligase of Methanosarcina acetivorans (strain ATCC 35395 / DSM 2834 / JCM 12185 / C2A).